Reading from the N-terminus, the 212-residue chain is Protein-L-isoaspartate O-methyltransferase 1 (212 aa).

Residue serine 60 is part of the active site.

This sequence belongs to the methyltransferase superfamily. L-isoaspartyl/D-aspartyl protein methyltransferase family.

The protein resides in the cytoplasm. It carries out the reaction [protein]-L-isoaspartate + S-adenosyl-L-methionine = [protein]-L-isoaspartate alpha-methyl ester + S-adenosyl-L-homocysteine. Functionally, catalyzes the methyl esterification of L-isoaspartyl residues in peptides and proteins that result from spontaneous decomposition of normal L-aspartyl and L-asparaginyl residues. It plays a role in the repair and/or degradation of damaged proteins. The chain is Protein-L-isoaspartate O-methyltransferase 1 from Anaeromyxobacter sp. (strain Fw109-5).